We begin with the raw amino-acid sequence, 169 residues long: Disulfide bond formation protein B (169 aa).

At 1 to 14 (MSNDTFYLKREKRF) the chain is on the cytoplasmic side. The helical transmembrane segment at 15-31 (LVLLGIICLSLIGGALY) threads the bilayer. The Periplasmic portion of the chain corresponds to 32–49 (MQIALGEAPCPLCILQRY). Cysteines 41 and 44 form a disulfide. A helical membrane pass occupies residues 50–64 (ALLFIAIFAFIGAAM). Topologically, residues 65 to 71 (NGRRGVT) are cytoplasmic. Residues 72–89 (VFEALVTLSALCGIAAAG) form a helical membrane-spanning segment. Over 90–144 (RHAWILAHPSDSCGIDILQPIVDGLPLATLFPTGFQVSGFCTTPYPPVLGLSLAQ) the chain is Periplasmic. Cys102 and Cys130 are joined by a disulfide. The chain crosses the membrane as a helical span at residues 145–163 (WALTAFVLTAILVPACIIR). The Cytoplasmic segment spans residues 164-169 (NRRKPY).

This sequence belongs to the DsbB family.

Its subcellular location is the cell inner membrane. In terms of biological role, required for disulfide bond formation in some periplasmic proteins. Acts by oxidizing the DsbA protein. The chain is Disulfide bond formation protein B from Pseudomonas syringae pv. tomato (strain ATCC BAA-871 / DC3000).